The primary structure comprises 166 residues: Phospholipase A2 inhibitor B1 (166 aa).

A signal peptide spans 1–19; that stretch reads MRLILLSGLLLLGTFLVNG. Residues 46–161 form the C-type lectin domain; it reads LFHAFLTVHK…CDDNLLVVCE (116 aa). Cystine bridges form between C83/C160 and C138/C152. N122 carries N-linked (GlcNAc...) asparagine glycosylation.

It belongs to the alpha-type phospholipase A2 inhibitor family. Homotrimer; non-covalently linked. In terms of tissue distribution, expressed by the liver.

Its subcellular location is the secreted. This phospholipase A2 inhibitor binds directly phospholipase A2 in the presence or absence of calcium. This chain is Phospholipase A2 inhibitor B1, found in Crotalus durissus terrificus (South American rattlesnake).